A 596-amino-acid chain; its full sequence is MNILSRKENVASYFDIRVAAEHDLIVIQGLADSAEPTPLSGSVVLCLNEAISVKAISLKLVGKCRISWSEPSPTVRGGQRHNKQEYVVYEKNWIFVPYTGANRTLRAGNYEYPFHVMLPGDIAESVEGLQSCYVVYRLKASIDRTGLASKMVKKKHIRLIRALPADAIEYTQTISVDNTWPNKIEYTISVPTKAYAIGSYIPIHFVLVPLLKRLTIGKISITLKEYITLHVAHGYNGLPASKDEVRTVRSLQTEELEEFSDHYELTKNLELPSSLVECLQDCDLDGIKIRHKLKFSVSLRNPDGHISELRAALPVVLMIPPQLFGDRAEVESLRENFESFNQPLPSYQNSMYDRLYDGLSYSNLDTPLPSGATTPRRRDSMEPTYASNEAHRRQLIAGLTELALQQQPQGRSPNEHSPSNHPEDFPPSFSLGSNPSSGAASAVITRNPSETSLADLSRVPSYKEATRSAVPLESPLQSTLPSYEDVARIEHLSRPPSPGIVTPPQRTSPSFFVSPTESTRQSLDSRRSFEHSTSSSSGISPSHSSASLAHLSQASNPNGSSSAPHRPTSARVGSHRNALDALRRARMLPSGFSRRN.

The chain crosses the membrane as a helical span at residues 194–211 (AYAIGSYIPIHFVLVPLL). Disordered stretches follow at residues 363 to 387 (NLDT…TYAS) and 405 to 446 (QQQP…VITR). Phosphothreonine occurs at positions 373 and 374. Polar residues-rich tracts occupy residues 405 to 420 (QQQP…SPSN) and 430 to 446 (SLGS…VITR). 4 positions are modified to phosphoserine: Ser-452, Ser-474, Ser-493, and Ser-497. Positions 493–596 (SRPPSPGIVT…MLPSGFSRRN (104 aa)) are disordered. Residues Thr-502 and Thr-507 each carry the phosphothreonine modification. Residues 504-522 (PQRTSPSFFVSPTESTRQS) are compositionally biased toward polar residues. A Phosphoserine modification is found at Ser-514. Over residues 531–555 (HSTSSSSGISPSHSSASLAHLSQAS) the composition is skewed to low complexity.

The protein belongs to the arrestin family.

Its subcellular location is the membrane. The sequence is that of Arrestin domain-containing protein C31A2.12 from Schizosaccharomyces pombe (strain 972 / ATCC 24843) (Fission yeast).